The primary structure comprises 519 residues: B3 domain-containing protein Os03g0620400 (519 aa).

The segment at residues 26 to 119 is a DNA-binding region (TF-B3 1); that stretch reads MKCFHLQMSA…RFEVLILDSD (94 aa). A disordered region spans residues 138–218; the sequence is ERNAAPVDIS…DPQMPPGRNY (81 aa). A compositionally biased stretch (acidic residues) spans 189-209; sequence SGEEGTDSSTSEDESSYELDD. DNA-binding regions (TF-B3) lie at residues 249-349 and 416-516; these read VAIM…LRET and YVSI…IRRN.

The protein resides in the nucleus. This is B3 domain-containing protein Os03g0620400 from Oryza sativa subsp. japonica (Rice).